Consider the following 441-residue polypeptide: Ribosomal protein uS12 methylthiotransferase RimO (441 aa).

Positions 8–118 constitute an MTTase N-terminal domain; that stretch reads PKIGFVSLGC…VLQHVHHYVP (111 aa). [4Fe-4S] cluster-binding residues include Cys-17, Cys-53, Cys-82, Cys-150, Cys-154, and Cys-157. One can recognise a Radical SAM core domain in the interval 136–373; the sequence is LTPRHYAYLK…MALQQQISAE (238 aa). The region spanning 376–441 is the TRAM domain; sequence QEKVGREILV…DEYDLWGSLV (66 aa).

Belongs to the methylthiotransferase family. RimO subfamily. It depends on [4Fe-4S] cluster as a cofactor.

Its subcellular location is the cytoplasm. The enzyme catalyses L-aspartate(89)-[ribosomal protein uS12]-hydrogen + (sulfur carrier)-SH + AH2 + 2 S-adenosyl-L-methionine = 3-methylsulfanyl-L-aspartate(89)-[ribosomal protein uS12]-hydrogen + (sulfur carrier)-H + 5'-deoxyadenosine + L-methionine + A + S-adenosyl-L-homocysteine + 2 H(+). In terms of biological role, catalyzes the methylthiolation of an aspartic acid residue of ribosomal protein uS12. This is Ribosomal protein uS12 methylthiotransferase RimO from Cronobacter sakazakii (strain ATCC BAA-894) (Enterobacter sakazakii).